Here is a 135-residue protein sequence, read N- to C-terminus: Hydroxylaminobenzene mutase HabA (135 aa).

4 consecutive transmembrane segments (helical) span residues leucine 5–valine 25, valine 33–tyrosine 55, phenylalanine 67–tryptophan 87, and phenylalanine 113–isoleucine 133.

The protein resides in the cell membrane. The catalysed reaction is N-phenylhydroxylamine = 2-aminophenol. In terms of biological role, catalyzes the rearrangement of hydroxylaminobenzene to 2-aminophenol. Involved in the degradation of nitrobenzene. This Ectopseudomonas oleovorans (Pseudomonas oleovorans) protein is Hydroxylaminobenzene mutase HabA (habA).